We begin with the raw amino-acid sequence, 190 residues long: Ganglioside GM2 activator (190 aa).

Residues 1–23 (MQSLMQAPVLIALGLLFAAPAQA) form the signal peptide. Intrachain disulfides connect cysteine 36/cysteine 180, cysteine 96/cysteine 103, cysteine 109/cysteine 135, and cysteine 122/cysteine 133. N-linked (GlcNAc...) asparagine glycosylation is present at asparagine 60.

The protein localises to the lysosome. The catalysed reaction is cholesterol(in) = cholesterol(out). Its function is as follows. The large binding pocket can accommodate several single chain phospholipids and fatty acids, GM2A also exhibits some calcium-independent phospholipase activity. Binds gangliosides and stimulates ganglioside GM2 degradation. It stimulates only the breakdown of ganglioside GM2 and glycolipid GA2 by beta-hexosaminidase A. It extracts single GM2 molecules from membranes and presents them in soluble form to beta-hexosaminidase A for cleavage of N-acetyl-D-galactosamine and conversion to GM3. Has cholesterol transfer activity. The chain is Ganglioside GM2 activator (GM2A) from Macaca fascicularis (Crab-eating macaque).